We begin with the raw amino-acid sequence, 266 residues long: MTEKPRIFIVSDSIGETAQYVVDATVSQFNGYLDSKRFSYVQTTRELNNIIKKATEQKTLIAYTLIDPRLREEIATLARKNNIYAVDIMGPMMEAFEEFFQKKPRLQPGLVHRLDKDYFKRVEAMEFTVKYDDSNDDRGVKEADVVLIGVSRTSKTPMCIYLSYRGYKAANIPLVPEVEPTPLIYENPDNKVIGLTIDPLLLNEIRQERLKSLGIDPESSYASIDRINVELEYAEKTMEKIGCPVIDVTNKSIEESANEVIDYLNG.

149 to 156 (GVSRTSKT) lines the ADP pocket.

The protein belongs to the pyruvate, phosphate/water dikinase regulatory protein family. PDRP subfamily.

The enzyme catalyses N(tele)-phospho-L-histidyl/L-threonyl-[pyruvate, phosphate dikinase] + ADP = N(tele)-phospho-L-histidyl/O-phospho-L-threonyl-[pyruvate, phosphate dikinase] + AMP + H(+). It catalyses the reaction N(tele)-phospho-L-histidyl/O-phospho-L-threonyl-[pyruvate, phosphate dikinase] + phosphate + H(+) = N(tele)-phospho-L-histidyl/L-threonyl-[pyruvate, phosphate dikinase] + diphosphate. In terms of biological role, bifunctional serine/threonine kinase and phosphorylase involved in the regulation of the pyruvate, phosphate dikinase (PPDK) by catalyzing its phosphorylation/dephosphorylation. In Halothermothrix orenii (strain H 168 / OCM 544 / DSM 9562), this protein is Putative pyruvate, phosphate dikinase regulatory protein.